The primary structure comprises 452 residues: MAVGLNKKEIDGPASQRAVACDLEPALPPIGARVTLNYPGKMDESIILQKKDTKYLRVGSDFAKESSLILPNSFIWSDNSLALNRLMVEGKKAKLIYLDPPYATGMGFSSRSNEHAYDDCLTEAAYLEFMRRRLILMREILDDDGTIYVHIGHQMLGELKCLLDEIFGRERFINLITRRKCSSKNSTKNNFANLNDYILCYSKGKKYIWNRPLKKPDAEWLAKEYPKTDSKGQFKLVPIHAPGVRHGATGGEWKGMLPPPGKHWQYTPEKLDILDASGDIHWSKTGNPRRKVYLTDDKSIGYTDYWEEFRDAHHQSILVTGYPTEKNFNMMKLIVGASSNPGDLVIDPFCGSGSTLHAASLLQRKWIGIDESLFAAKTVMKRFAIGRAPMGDYVNTSLNKQTELPLSLNETARHEYVSNDFNIYVDELTASVSKNELAEIQKAYRDLKANQQ.

Belongs to the N(4)/N(6)-methyltransferase family.

The enzyme catalyses a 2'-deoxyadenosine in DNA + S-adenosyl-L-methionine = an N(6)-methyl-2'-deoxyadenosine in DNA + S-adenosyl-L-homocysteine + H(+). In terms of biological role, a beta subtype methylase, recognizes the double-stranded sequence 5'-GGTNACC-3', methylates A-5 on both strands and protects the DNA from cleavage by the EcaI endonuclease. The sequence is that of Type II methyltransferase M.EcaI (ecaIM) from Enterobacter cloacae.